The primary structure comprises 339 residues: NADH-quinone oxidoreductase subunit H (339 aa).

9 consecutive transmembrane segments (helical) span residues Ile-9–Cys-29, Pro-50–Phe-70, Ile-82–Ile-102, Val-115–Gly-135, Met-161–Ile-181, Met-187–Leu-207, Met-235–Thr-255, Ile-275–Ile-295, and Gly-311–Val-331.

Belongs to the complex I subunit 1 family. As to quaternary structure, NDH-1 is composed of 14 different subunits. Subunits NuoA, H, J, K, L, M, N constitute the membrane sector of the complex.

It is found in the cell membrane. It carries out the reaction a quinone + NADH + 5 H(+)(in) = a quinol + NAD(+) + 4 H(+)(out). Its function is as follows. NDH-1 shuttles electrons from NADH, via FMN and iron-sulfur (Fe-S) centers, to quinones in the respiratory chain. The immediate electron acceptor for the enzyme in this species is believed to be ubiquinone. Couples the redox reaction to proton translocation (for every two electrons transferred, four hydrogen ions are translocated across the cytoplasmic membrane), and thus conserves the redox energy in a proton gradient. This subunit may bind ubiquinone. The sequence is that of NADH-quinone oxidoreductase subunit H from Rickettsia africae (strain ESF-5).